Reading from the N-terminus, the 369-residue chain is MKKVIVGISGGVDSSVAAWLLQQQGYLVEGLFMKNWENDDEKEYCSSEEDLSDAWSICNTLKIPLHTVNFAQEYWENVFQVFLQAYQSGFTPNPDVLCNKEIKFKHFLDFALEDLGADFIATGHYVRCMNVKKKITLMKGIDQNKDQSYFLYTLNQQQLKRCLFPIGSLTKLTVRKIAKELNLITANKKDSTGICFIGKRNFRSFLSNYIAIQPGDIINIHGNKLGLHQGIPFYTIGQRKGLNIGGISNGNGKPWYVVDKNITHNVLIVAQGINHPCLMSRIFIVQKIFWIKGNILKSPIQCSVKIRYQQSDVQCQIYPISVDTLKIILKQPVTAIAPGQSAVFYIKKHCIGGGTIIKRFPLIHIKNYY.

ATP-binding positions include Gly-7–Ser-14 and Met-33. Residues Asn-93 to Asp-95 are interaction with target base in tRNA. Cys-98 serves as the catalytic Nucleophile. A disulfide bridge links Cys-98 with Cys-195. Gly-123 contributes to the ATP binding site. Residues Lys-145–Gln-147 are interaction with tRNA. Residue Cys-195 is the Cysteine persulfide intermediate of the active site. An interaction with tRNA region spans residues Arg-307 to Tyr-308.

This sequence belongs to the MnmA/TRMU family. In terms of assembly, interacts with TusE.

It is found in the cytoplasm. It carries out the reaction S-sulfanyl-L-cysteinyl-[protein] + uridine(34) in tRNA + AH2 + ATP = 2-thiouridine(34) in tRNA + L-cysteinyl-[protein] + A + AMP + diphosphate + H(+). Functionally, catalyzes the 2-thiolation of uridine at the wobble position (U34) of tRNA(Lys), tRNA(Glu) and tRNA(Gln), leading to the formation of s(2)U34, the first step of tRNA-mnm(5)s(2)U34 synthesis. Sulfur is provided by IscS, via a sulfur-relay system. Binds ATP and its substrate tRNAs. The chain is tRNA-specific 2-thiouridylase MnmA from Blochmanniella floridana.